The following is a 237-amino-acid chain: Carbohydrate deacetylase (237 aa).

Positions 59 and 125 each coordinate Mg(2+).

This sequence belongs to the YdjC deacetylase family. Mg(2+) serves as cofactor.

Probably catalyzes the deacetylation of acetylated carbohydrates an important step in the degradation of oligosaccharides. The sequence is that of Carbohydrate deacetylase from Halalkalibacterium halodurans (strain ATCC BAA-125 / DSM 18197 / FERM 7344 / JCM 9153 / C-125) (Bacillus halodurans).